The sequence spans 388 residues: MTNIIRQFLRQEAAGGIILIVAAIIALIMANTPAQGIYHAFLNLPVMVKVSSLEIAKPLLLWINDGLMAIFFLVVGLEVKRELMQGSLAGRDKAVFPAIAALGGMLAPALIYLMFNGADEVTRQGWAIPAATDIAFALGVMALLGNRVPTSLKVFLLALAIIDDLGVIVIIALFYTHEVSMAALGVAAASIAVLAFMNWRGVGKTSLYMIVGLVLWVAILKSGVHATLAGVIIGFMIPLNVKKGPSPSETLEHELHPWVAFLILPLFAFANAGVSLQGVSLSGLTSLLPVGIAAGLFIGKPLGIFTFSLLAVKLGIARLPEGIGFKQVFAVSVLCGIGFTMSIFIASLAFGDADVVLSTYSRLGILIGSTTAAVVGYGLLRMSLPRVR.

The next 12 membrane-spanning stretches (helical) occupy residues 13–33 (AAGG…ANTP), 36–56 (GIYH…LEIA), 59–79 (LLLW…GLEV), 95–115 (VFPA…YLMF), 125–145 (GWAI…ALLG), 154–174 (VFLL…IALF), 179–199 (VSMA…FMNW), 213–233 (LVLW…GVII), 259–279 (VAFL…LQGV), 287–307 (LLPV…IFTF), 328–348 (VFAV…IASL), and 363–383 (LGIL…LRMS).

This sequence belongs to the NhaA Na(+)/H(+) (TC 2.A.33) antiporter family.

The protein localises to the cell inner membrane. It carries out the reaction Na(+)(in) + 2 H(+)(out) = Na(+)(out) + 2 H(+)(in). In terms of biological role, na(+)/H(+) antiporter that extrudes sodium in exchange for external protons. This chain is Na(+)/H(+) antiporter NhaA, found in Serratia proteamaculans (strain 568).